The chain runs to 239 residues: Ribosomal RNA small subunit methyltransferase G (239 aa).

Residues Gly78, Phe83, 129-130, and Arg148 each bind S-adenosyl-L-methionine; that span reads AE.

It belongs to the methyltransferase superfamily. RNA methyltransferase RsmG family.

It is found in the cytoplasm. Its function is as follows. Specifically methylates the N7 position of a guanine in 16S rRNA. The polypeptide is Ribosomal RNA small subunit methyltransferase G (Clostridium botulinum (strain Alaska E43 / Type E3)).